A 296-amino-acid polypeptide reads, in one-letter code: mRNA 3'-end-processing protein RNA15 (296 aa).

The RRM domain maps to arginine 18–asparagine 96. The interval isoleucine 99–phenylalanine 140 is disordered. Positions serine 100–serine 135 are enriched in low complexity.

Component of the CFIA complex, which is composed of RNA14, RNA15, PCF11 and CLP1. Interacts directly with RNA14. Interacts with polyadenylate-binding protein PAB1.

It localises to the nucleus. In terms of biological role, RNA-binding component of the cleavage factor IA (CFIA) complex, which is involved in the endonucleolytic cleavage during polyadenylation-dependent pre-mRNA 3'-end formation and cooperates with the cleavage factor NAB4/CFIB and the cleavage and polyadenylation factor (CPF) complex. Binds to A-rich RNA sequence elements. This is mRNA 3'-end-processing protein RNA15 (RNA15) from Saccharomyces cerevisiae (strain ATCC 204508 / S288c) (Baker's yeast).